Consider the following 122-residue polypeptide: Large ribosomal subunit protein uL14 (122 aa).

Belongs to the universal ribosomal protein uL14 family. Part of the 50S ribosomal subunit. Forms a cluster with proteins L3 and L19. In the 70S ribosome, L14 and L19 interact and together make contacts with the 16S rRNA in bridges B5 and B8.

In terms of biological role, binds to 23S rRNA. Forms part of two intersubunit bridges in the 70S ribosome. This chain is Large ribosomal subunit protein uL14, found in Laribacter hongkongensis (strain HLHK9).